Reading from the N-terminus, the 31-residue chain is Cyclotide hyen-I (31 aa).

Residues 1–31 constitute a cross-link (cyclopeptide (Gly-Asp)); it reads GSTPCGESCVWIPCISGIVGCSCSNKVCYMD. 3 disulfides stabilise this stretch: Cys5-Cys21, Cys9-Cys23, and Cys14-Cys28.

Post-translationally, this is a cyclic peptide. In terms of tissue distribution, detected in seeds (at protein level).

Functionally, probably participates in a plant defense mechanism. The chain is Cyclotide hyen-I from Pigea enneasperma (Spade flower).